The sequence spans 450 residues: Phosphoglucosamine mutase (450 aa).

The Phosphoserine intermediate role is filled by Ser102. 4 residues coordinate Mg(2+): Ser102, Asp244, Asp246, and Asp248. Ser102 carries the phosphoserine modification.

The protein belongs to the phosphohexose mutase family. Mg(2+) is required as a cofactor. In terms of processing, activated by phosphorylation.

It carries out the reaction alpha-D-glucosamine 1-phosphate = D-glucosamine 6-phosphate. Catalyzes the conversion of glucosamine-6-phosphate to glucosamine-1-phosphate. In Solidesulfovibrio magneticus (strain ATCC 700980 / DSM 13731 / RS-1) (Desulfovibrio magneticus), this protein is Phosphoglucosamine mutase.